The following is an 88-amino-acid chain: EMBRYO SURROUNDING FACTOR 1-like protein 3 (88 aa).

A signal peptide spans 1-22; sequence MKLSQIALICIVIASLFAMHEC. Intrachain disulfides connect C41/C56, C54/C80, and C57/C67.

It belongs to the MEG family. As to expression, expressed in stems, leaves and flowers.

The polypeptide is EMBRYO SURROUNDING FACTOR 1-like protein 3 (ESFL3) (Arabidopsis thaliana (Mouse-ear cress)).